A 403-amino-acid chain; its full sequence is Ribosomal RNA large subunit methyltransferase I (403 aa).

In terms of domain architecture, PUA spans 9–88 (YPRLVLSKGR…ESIDIAFFTR (80 aa)).

The protein belongs to the methyltransferase superfamily. RlmI family.

The protein localises to the cytoplasm. It carries out the reaction cytidine(1962) in 23S rRNA + S-adenosyl-L-methionine = 5-methylcytidine(1962) in 23S rRNA + S-adenosyl-L-homocysteine + H(+). Specifically methylates the cytosine at position 1962 (m5C1962) of 23S rRNA. The polypeptide is Ribosomal RNA large subunit methyltransferase I (Salmonella agona (strain SL483)).